The sequence spans 38 residues: A2-specific pheromone (38 aa).

C35 carries the post-translational modification Cysteine methyl ester. C35 is lipidated: S-farnesyl cysteine. The propeptide at 36–38 (LIA) is removed in mature form.

The protein resides in the cell membrane. In terms of biological role, mating pheromone for A2 allele. The protein is A2-specific pheromone (MFA2) of Mycosarcoma maydis (Corn smut fungus).